The sequence spans 558 residues: Putative F-box/LRR-repeat protein R542 (558 aa).

Residues 1-47 enclose the F-box domain; it reads MLLNLPYEILLIIFSLIESKKFFKLLSINKEVREFILTMLNQNPKSF. LRR repeat units lie at residues 73-105, 139-176, 177-220, 251-284, 285-317, 329-361, 369-395, 420-444, 445-477, and 481-508; these read KSTI…GLSF, CGKI…NLQC, CMRI…KIDG, LDKL…DLSG, CINL…GLSY, CFRI…GFFY, VVGY…TISD, CNNI…DLRY, CNNI…GISY, and SKKI…VFKT.

This Acanthamoeba polyphaga mimivirus (APMV) protein is Putative F-box/LRR-repeat protein R542.